The following is a 205-amino-acid chain: Outer-membrane lipoprotein carrier protein (205 aa).

The N-terminal stretch at 1–22 (MKKIVIVISILLTSFLSSAVSA) is a signal peptide.

This sequence belongs to the LolA family. Monomer.

The protein resides in the periplasm. In terms of biological role, participates in the translocation of lipoproteins from the inner membrane to the outer membrane. Only forms a complex with a lipoprotein if the residue after the N-terminal Cys is not an aspartate (The Asp acts as a targeting signal to indicate that the lipoprotein should stay in the inner membrane). This is Outer-membrane lipoprotein carrier protein from Psychromonas ingrahamii (strain DSM 17664 / CCUG 51855 / 37).